The primary structure comprises 115 residues: Large ribosomal subunit protein bL20 (115 aa).

This sequence belongs to the bacterial ribosomal protein bL20 family.

Its function is as follows. Binds directly to 23S ribosomal RNA and is necessary for the in vitro assembly process of the 50S ribosomal subunit. It is not involved in the protein synthesizing functions of that subunit. This Prochlorococcus marinus (strain AS9601) protein is Large ribosomal subunit protein bL20.